Reading from the N-terminus, the 376-residue chain is Erythronate-4-phosphate dehydrogenase (376 aa).

Substrate-binding residues include serine 45 and threonine 67. Aspartate 147 contacts NAD(+). Arginine 209 is an active-site residue. Position 233 (aspartate 233) interacts with NAD(+). Glutamate 238 is a catalytic residue. The Proton donor role is filled by histidine 255. Glycine 258 contacts NAD(+). Tyrosine 259 serves as a coordination point for substrate.

It belongs to the D-isomer specific 2-hydroxyacid dehydrogenase family. PdxB subfamily. In terms of assembly, homodimer.

The protein localises to the cytoplasm. The catalysed reaction is 4-phospho-D-erythronate + NAD(+) = (R)-3-hydroxy-2-oxo-4-phosphooxybutanoate + NADH + H(+). It participates in cofactor biosynthesis; pyridoxine 5'-phosphate biosynthesis; pyridoxine 5'-phosphate from D-erythrose 4-phosphate: step 2/5. In terms of biological role, catalyzes the oxidation of erythronate-4-phosphate to 3-hydroxy-2-oxo-4-phosphonooxybutanoate. This chain is Erythronate-4-phosphate dehydrogenase, found in Shewanella loihica (strain ATCC BAA-1088 / PV-4).